The primary structure comprises 267 residues: Cyclin-C (267 aa).

The Cyclin N-terminal domain occupies 48-151 (IQVLGEQLKL…LLENLDCCLI (104 aa)).

This sequence belongs to the cyclin family. Cyclin C subfamily. Component of the Cdk8 module of the Mediator complex.

It is found in the nucleus. Its function is as follows. Component of the Mediator complex, a coactivator involved in regulated gene transcription of nearly all RNA polymerase II-dependent genes. Mediator functions as a bridge to convey information from gene-specific regulatory proteins to the basal RNA polymerase II transcription machinery. Mediator is recruited to promoters by direct interactions with regulatory proteins and serves as a scaffold for the assembly of a functional preinitiation complex with RNA polymerase II and the general transcription factors. Binds to and activates cyclin-dependent kinase Cdk8 that phosphorylates the CTD (C-terminal domain) of the large subunit of RNA polymerase II (RNAp II), which may inhibit the formation of a transcription initiation complex. The sequence is that of Cyclin-C (CycC) from Drosophila pseudoobscura pseudoobscura (Fruit fly).